A 251-amino-acid chain; its full sequence is Hydroxyacylglutathione hydrolase (251 aa).

7 residues coordinate Zn(2+): histidine 58, histidine 60, aspartate 62, histidine 63, histidine 116, aspartate 135, and histidine 173.

This sequence belongs to the metallo-beta-lactamase superfamily. Glyoxalase II family. In terms of assembly, monomer. It depends on Zn(2+) as a cofactor.

The catalysed reaction is an S-(2-hydroxyacyl)glutathione + H2O = a 2-hydroxy carboxylate + glutathione + H(+). It participates in secondary metabolite metabolism; methylglyoxal degradation; (R)-lactate from methylglyoxal: step 2/2. In terms of biological role, thiolesterase that catalyzes the hydrolysis of S-D-lactoyl-glutathione to form glutathione and D-lactic acid. The chain is Hydroxyacylglutathione hydrolase from Bdellovibrio bacteriovorus (strain ATCC 15356 / DSM 50701 / NCIMB 9529 / HD100).